A 520-amino-acid chain; its full sequence is Laccase-1 (520 aa).

Residues 1-21 (MSRFHSLLAFVVASLTAVAHA) form the signal peptide. 2 consecutive Plastocyanin-like domains span residues 23 to 148 (IGPV…FVVY) and 160 to 302 (VDND…ILRY). Residues N72 and N75 are each glycosylated (N-linked (GlcNAc...) asparagine). H85, H87, H130, and H132 together coordinate Cu cation. 2 cysteine pairs are disulfide-bonded: C106–C509 and C138–C226. Residues N229, N238, N354, and N361 are each glycosylated (N-linked (GlcNAc...) asparagine). Residues 369–491 (TVPVLLQIIS…AGFAVVFAED (123 aa)) form the Plastocyanin-like 3 domain. Cu cation-binding residues include H416, H419, H421, H473, C474, H475, and H479.

This sequence belongs to the multicopper oxidase family. As to quaternary structure, homodimer. Cu cation is required as a cofactor.

It is found in the secreted. The enzyme catalyses 4 hydroquinone + O2 = 4 benzosemiquinone + 2 H2O. In terms of biological role, lignin degradation and detoxification of lignin-derived products. The sequence is that of Laccase-1 from Trametes villosa (White-rot fungus).